Here is a 266-residue protein sequence, read N- to C-terminus: Phosphatidate cytidylyltransferase (266 aa).

The next 8 membrane-spanning stretches (helical) occupy residues 16-36 (VVLIVVAGLILYADNLLLFWA), 52-72 (LFQVKASFSLYLILVLSWVAA), 78-98 (PVECALISAMVMASVIAYQKA), 101-121 (SEAILPFLYPGVGFFALFGVY), 125-145 (GAVAIIWLLVVVVASDVGAFF), 164-184 (LEGALIGVVLASVLGSFVGMG), 186-206 (LSGGFLMALLFSFLIALMAVF), and 237-257 (LDSMLFGALSLHVLLYFLEIW).

Belongs to the CDS family.

The protein resides in the cell inner membrane. The enzyme catalyses a 1,2-diacyl-sn-glycero-3-phosphate + CTP + H(+) = a CDP-1,2-diacyl-sn-glycerol + diphosphate. It functions in the pathway phospholipid metabolism; CDP-diacylglycerol biosynthesis; CDP-diacylglycerol from sn-glycerol 3-phosphate: step 3/3. In Helicobacter pylori (strain J99 / ATCC 700824) (Campylobacter pylori J99), this protein is Phosphatidate cytidylyltransferase (cdsA).